A 153-amino-acid polypeptide reads, in one-letter code: Transthyretin (153 aa).

The signal sequence occupies residues 1–19; sequence MASFKSFLLLALLAIVSEA. A Sulfocysteine modification is found at Cys34. L-thyroxine-binding residues include Lys39 and Glu78. Asn81 is a glycosylation site (N-linked (GlcNAc...) asparagine). Ser141 serves as a coordination point for L-thyroxine.

This sequence belongs to the transthyretin family. Homotetramer. Dimer of dimers. In the homotetramer, subunits assemble around a central channel that can accommodate two ligand molecules. Interacts with rbp4. Sulfonation of the reactive cysteine Cys-34 enhances the stability of the native conformation of TTR, avoiding misassembly of the protein leading to amyloid formation. In terms of tissue distribution, detected in plasma (at protein level). Expressed during metamorphosis in tadpole liver, but not in tadpole brain nor adult liver. Between 1.5 and 3 days of development, also expressed in the mesoderm of the kidney.

The protein resides in the secreted. Functionally, thyroid hormone-binding protein, with a much higher binding affinity for triiodothyronine (T3) than for thyroxine (T4). Probably transports triiodothyronine from the bloodstream to the brain. This chain is Transthyretin (ttr), found in Xenopus laevis (African clawed frog).